The following is a 643-amino-acid chain: Fructose-1,6-bisphosphatase class 3 (643 aa).

It belongs to the FBPase class 3 family. Mn(2+) is required as a cofactor.

The enzyme catalyses beta-D-fructose 1,6-bisphosphate + H2O = beta-D-fructose 6-phosphate + phosphate. Its pathway is carbohydrate biosynthesis; gluconeogenesis. The polypeptide is Fructose-1,6-bisphosphatase class 3 (Streptococcus agalactiae serotype Ia (strain ATCC 27591 / A909 / CDC SS700)).